The chain runs to 119 residues: Ribonuclease P protein component (119 aa).

Belongs to the RnpA family. Consists of a catalytic RNA component (M1 or rnpB) and a protein subunit.

The enzyme catalyses Endonucleolytic cleavage of RNA, removing 5'-extranucleotides from tRNA precursor.. In terms of biological role, RNaseP catalyzes the removal of the 5'-leader sequence from pre-tRNA to produce the mature 5'-terminus. It can also cleave other RNA substrates such as 4.5S RNA. The protein component plays an auxiliary but essential role in vivo by binding to the 5'-leader sequence and broadening the substrate specificity of the ribozyme. In Bifidobacterium longum (strain DJO10A), this protein is Ribonuclease P protein component.